The sequence spans 563 residues: (-)-germacrene D synthase (563 aa).

A coiled-coil region spans residues 44-71 (TEITAAEKEELEKQKEKVKNLLDQTPND). The Mn(2+) site is built by Asp314 and Asp318. The DDXXD motif signature appears at 314–318 (DDIYD). Homodimerization stretches follow at residues 320 to 326 (YGSLDEL) and 392 to 429 (EAEW…VGME). Positions 459 and 467 each coordinate Mn(2+).

Belongs to the terpene synthase family. As to quaternary structure, homodimer. Mn(2+) is required as a cofactor. Mg(2+) serves as cofactor. As to expression, expressed in peltate glandular trichomes. Present at low levels in flowers, leaves and stems.

It carries out the reaction (2E,6E)-farnesyl diphosphate = (-)-germacrene D + diphosphate. It functions in the pathway secondary metabolite biosynthesis; terpenoid biosynthesis. Its function is as follows. Involved in the biosynthesis of phenolic sesquiterpenes natural products. Sesquiterpene synthase that catalyzes mainly the formation of (-)-germacrene D and minor amounts of other sesquiterpenes (e.g. bicyclo-germacrene) from farnesyl diphosphate (FPP). Also triggers moderate amounts formation of myrcene, limonene, terpinolene and linalool in the presence of geranyl diphosphate (GPP). The chain is (-)-germacrene D synthase from Origanum vulgare (Wild marjoram).